Consider the following 192-residue polypeptide: Ion-translocating oxidoreductase complex subunit A (192 aa).

Transmembrane regions (helical) follow at residues 5–25, 39–59, 63–83, 102–122, 134–154, and 171–191; these read LLLL…FLGL, IGMG…AYLV, ILTP…VIAV, LLGI…VALL, IIYG…FAAM, and SIAM…TGLV.

It belongs to the NqrDE/RnfAE family. In terms of assembly, the complex is composed of six subunits: RnfA, RnfB, RnfC, RnfD, RnfE and RnfG.

The protein localises to the cell inner membrane. In terms of biological role, part of a membrane-bound complex that couples electron transfer with translocation of ions across the membrane. This chain is Ion-translocating oxidoreductase complex subunit A, found in Vibrio atlanticus (strain LGP32) (Vibrio splendidus (strain Mel32)).